Here is a 469-residue protein sequence, read N- to C-terminus: uncharacterized protein (469 aa).

An N-terminal signal peptide occupies residues M1 to G19. 7 helical membrane passes run I199–L219, A236–I256, A283–V303, Y305–L325, I338–A358, I386–L406, and G413–F433.

It is found in the membrane. This is an uncharacterized protein from Schizosaccharomyces pombe (strain 972 / ATCC 24843) (Fission yeast).